We begin with the raw amino-acid sequence, 310 residues long: Apolipoprotein E (310 aa).

An N-terminal signal peptide occupies residues 1-18 (MKVLWAALVVTLLAGCQA). Repeat copies occupy residues 77-98 (VLIE…QQLG), 99-120 (PMAQ…ARLG), 121-142 (ADME…AMMG), 143-164 (QSTE…KRLL), 165-186 (RDAE…EGAE), 187-204 (RSVN…EQAA), 205-226 (TVRS…QRLR), and 227-248 (GRLE…EQVQ). The segment at 77-248 (VLIEETMKEV…RLDEVREQVQ (172 aa)) is 8 X 22 AA approximate tandem repeats. At M140 the chain carries Methionine sulfoxide. S144 bears the Phosphoserine mark. Residues 155–165 (HLRKLRKRLLR) are LDL and other lipoprotein receptors binding. Heparin is bound at residue 159 to 162 (LRKR). The tract at residues 203 to 283 (AATVRSLVSK…SWFEPLVQDM (81 aa)) is lipid-binding and lipoprotein association. 222 to 229 (GQRLRGRL) contributes to the heparin binding site. Residues 259–310 (NQMRLQAEAFHARLKSWFEPLVQDMQQRWAELVEKVQLAVGTSPTSESSEKQ) are homooligomerization. Residues 271–283 (RLKSWFEPLVQDM) are specificity for association with VLDL.

It belongs to the apolipoprotein A1/A4/E family. Homotetramer. May interact with ABCA1; functionally associated with ABCA1 in the biogenesis of HDLs. May interact with APP/A4 amyloid-beta peptide; the interaction is extremely stable in vitro but its physiological significance is unclear. May interact with MAPT. May interact with MAP2. In the cerebrospinal fluid, interacts with secreted SORL1. Interacts with PMEL; this allows the loading of PMEL luminal fragment on ILVs to induce fibril nucleation. In terms of processing, APOE exists as multiple glycosylated and sialylated glycoforms within cells and in plasma. The extent of glycosylation and sialylation are tissue and context specific. Glycated in plasma VLDL. Post-translationally, phosphorylated by FAM20C in the extracellular medium.

Its subcellular location is the secreted. The protein localises to the extracellular space. It is found in the extracellular matrix. It localises to the extracellular vesicle. The protein resides in the endosome. Its subcellular location is the multivesicular body. APOE is an apolipoprotein, a protein associating with lipid particles, that mainly functions in lipoprotein-mediated lipid transport between organs via the plasma and interstitial fluids. APOE is a core component of plasma lipoproteins and is involved in their production, conversion and clearance. Apolipoproteins are amphipathic molecules that interact both with lipids of the lipoprotein particle core and the aqueous environment of the plasma. As such, APOE associates with chylomicrons, chylomicron remnants, very low density lipoproteins (VLDL) and intermediate density lipoproteins (IDL) but shows a preferential binding to high-density lipoproteins (HDL). It also binds a wide range of cellular receptors including the LDL receptor/LDLR, the LDL receptor-related proteins LRP1, LRP2 and LRP8 and the very low-density lipoprotein receptor/VLDLR that mediate the cellular uptake of the APOE-containing lipoprotein particles. Finally, APOE also has a heparin-binding activity and binds heparan-sulfate proteoglycans on the surface of cells, a property that supports the capture and the receptor-mediated uptake of APOE-containing lipoproteins by cells. A main function of APOE is to mediate lipoprotein clearance through the uptake of chylomicrons, VLDLs, and HDLs by hepatocytes. APOE is also involved in the biosynthesis by the liver of VLDLs as well as their uptake by peripheral tissues ensuring the delivery of triglycerides and energy storage in muscle, heart and adipose tissues. By participating in the lipoprotein-mediated distribution of lipids among tissues, APOE plays a critical role in plasma and tissues lipid homeostasis. APOE is also involved in two steps of reverse cholesterol transport, the HDLs-mediated transport of cholesterol from peripheral tissues to the liver, and thereby plays an important role in cholesterol homeostasis. First, it is functionally associated with ABCA1 in the biogenesis of HDLs in tissues. Second, it is enriched in circulating HDLs and mediates their uptake by hepatocytes. APOE also plays an important role in lipid transport in the central nervous system, regulating neuron survival and sprouting. The chain is Apolipoprotein E (APOE) from Tapirus indicus (Asiatic tapir).